Consider the following 1341-residue polypeptide: uncharacterized protein (1341 aa).

Residues 41–68 (CLLCRRRKQRCDHKLPSCTACLKAGIKC) constitute a DNA-binding region (zn(2)-C6 fungal-type). 5 stretches are compositionally biased toward low complexity: residues 72 to 93 (SKYS…AGTV), 779 to 791 (SNSA…SNSN), 864 to 906 (SNSS…NDNN), 920 to 967 (NHNN…GNNS), and 1036 to 1050 (SPSK…SSHS). Disordered regions lie at residues 72-100 (SKYS…PHPV), 770-804 (ISSG…MPPA), 864-971 (SNSS…QYVR), and 1031-1116 (TMTN…NSNP). Residues 1057–1076 (MTQSPTPYPQTSNMLPQQHV) show a composition bias toward polar residues. Positions 1078–1090 (RPLPQQQREQPQQ) are enriched in low complexity. Residues 1091-1116 (HITSPQRFSESNFTNQLNNGMINSNP) show a composition bias toward polar residues. Residue Ser1143 is modified to Phosphoserine. Residues 1220 to 1230 (SQEPSSLSMDK) show a composition bias toward polar residues. The disordered stretch occupies residues 1220-1240 (SQEPSSLSMDKQQQQHQQQNM).

The protein localises to the nucleus. This is an uncharacterized protein from Saccharomyces cerevisiae (strain ATCC 204508 / S288c) (Baker's yeast).